Reading from the N-terminus, the 162-residue chain is Caveolin-2 (162 aa).

Over M1–K86 the chain is Cytoplasmic. Y19 carries the phosphotyrosine; by SRC modification. Phosphoserine occurs at positions 20 and 23. Y27 carries the phosphotyrosine; by SRC modification. S36 bears the Phosphoserine mark. The segment at residues F87–L107 is an intramembrane region (helical). The Cytoplasmic segment spans residues S108–D162.

This sequence belongs to the caveolin family. Monomer or homodimer. Interacts with CAV1; the interaction forms a stable heterooligomeric complex that is required for targeting to lipid rafts and for caveolae formation. Tyrosine phosphorylated forms do not form heterooligomers with the Tyr-19-phosphorylated form existing as a monomer or dimer, and the Tyr-27-form as a monomer only. Interacts (tyrosine phosphorylated form) with the SH2 domain-containing proteins, RASA1, NCK1 and SRC. Interacts (tyrosine phosphorylated form) with INSR, the interaction (Tyr-27-phosphorylated form) is increased on insulin stimulation. Interacts (Tyr-19 phosphorylated form) with MAPK1 (phosphorylated form); the interaction, promoted by insulin, leads to nuclear location and MAPK1 activation. Interacts with STAT3; the interaction is increased on insulin-induced tyrosine phosphorylation leading to STAT activation. Phosphorylated on serine and tyrosine residues. CAV1 promotes phosphorylation on Ser-23 which then targets the complex to the plasma membrane, lipid rafts and caveolae. Phosphorylation on Ser-36 appears to modulate mitosis in endothelial cells. Phosphorylation on both Tyr-19 and Tyr-27 is required for insulin-induced 'Ser-727' phosphorylation of STAT3 and its activation. Phosphorylation on Tyr-19 is required for insulin-induced phosphorylation of MAPK1 and DNA binding of STAT3. Tyrosine phosphorylation is induced by both EGF and insulin (By. similarity).

It localises to the nucleus. It is found in the cytoplasm. The protein localises to the golgi apparatus membrane. Its subcellular location is the cell membrane. The protein resides in the membrane. It localises to the caveola. May act as a scaffolding protein within caveolar membranes. Interacts directly with G-protein alpha subunits and can functionally regulate their activity. Acts as an accessory protein in conjunction with CAV1 in targeting to lipid rafts and driving caveolae formation. The Ser-36 phosphorylated form has a role in modulating mitosis in endothelial cells. Positive regulator of cellular mitogenesis of the MAPK signaling pathway. Required for the insulin-stimulated nuclear translocation and activation of MAPK1 and STAT3, and the subsequent regulation of cell cycle progression. The sequence is that of Caveolin-2 (CAV2) from Pan troglodytes (Chimpanzee).